A 254-amino-acid polypeptide reads, in one-letter code: Acetylglutamate kinase (254 aa).

Substrate-binding positions include 40-41, arginine 62, and asparagine 158; that span reads GG.

Belongs to the acetylglutamate kinase family. ArgB subfamily.

Its subcellular location is the cytoplasm. The catalysed reaction is N-acetyl-L-glutamate + ATP = N-acetyl-L-glutamyl 5-phosphate + ADP. It participates in amino-acid biosynthesis; L-arginine biosynthesis; N(2)-acetyl-L-ornithine from L-glutamate: step 2/4. Functionally, catalyzes the ATP-dependent phosphorylation of N-acetyl-L-glutamate. This is Acetylglutamate kinase from Chloroflexus aggregans (strain MD-66 / DSM 9485).